The chain runs to 429 residues: Glutamyl-tRNA reductase (429 aa).

Residues 49–52 (TCNR), S107, 112–114 (EPQ), and Q118 each bind substrate. The active-site Nucleophile is the C50. 187 to 192 (GAGETI) is a binding site for NADP(+).

It belongs to the glutamyl-tRNA reductase family. In terms of assembly, homodimer.

It catalyses the reaction (S)-4-amino-5-oxopentanoate + tRNA(Glu) + NADP(+) = L-glutamyl-tRNA(Glu) + NADPH + H(+). It functions in the pathway porphyrin-containing compound metabolism; protoporphyrin-IX biosynthesis; 5-aminolevulinate from L-glutamyl-tRNA(Glu): step 1/2. Functionally, catalyzes the NADPH-dependent reduction of glutamyl-tRNA(Glu) to glutamate 1-semialdehyde (GSA). This is Glutamyl-tRNA reductase from Pseudomonas fluorescens (strain SBW25).